The sequence spans 565 residues: NAD-dependent malic enzyme (565 aa).

The active-site Proton donor is Tyr103. The active-site Proton acceptor is the Lys177. Glu248, Asp249, and Asp272 together coordinate a divalent metal cation. Residues Asp272 and Asn419 each coordinate NAD(+). The residue at position 445 (Ser445) is a Phosphoserine.

This sequence belongs to the malic enzymes family. Mg(2+) serves as cofactor. It depends on Mn(2+) as a cofactor.

It catalyses the reaction (S)-malate + NAD(+) = pyruvate + CO2 + NADH. The catalysed reaction is oxaloacetate + H(+) = pyruvate + CO2. The sequence is that of NAD-dependent malic enzyme (mae2) from Schizosaccharomyces pombe (strain 972 / ATCC 24843) (Fission yeast).